The following is a 173-amino-acid chain: Large ribosomal subunit protein uL16 (173 aa).

The protein belongs to the universal ribosomal protein uL16 family.

In Methanococcus maripaludis (strain C6 / ATCC BAA-1332), this protein is Large ribosomal subunit protein uL16.